A 110-amino-acid polypeptide reads, in one-letter code: Large ribosomal subunit protein uL22 (110 aa).

The protein belongs to the universal ribosomal protein uL22 family. As to quaternary structure, part of the 50S ribosomal subunit.

Its function is as follows. This protein binds specifically to 23S rRNA; its binding is stimulated by other ribosomal proteins, e.g. L4, L17, and L20. It is important during the early stages of 50S assembly. It makes multiple contacts with different domains of the 23S rRNA in the assembled 50S subunit and ribosome. The globular domain of the protein is located near the polypeptide exit tunnel on the outside of the subunit, while an extended beta-hairpin is found that lines the wall of the exit tunnel in the center of the 70S ribosome. This chain is Large ribosomal subunit protein uL22, found in Nitrosococcus oceani (strain ATCC 19707 / BCRC 17464 / JCM 30415 / NCIMB 11848 / C-107).